The sequence spans 240 residues: Guanine nucleotide exchange factor sopE2 (240 aa).

Residues 78–240 (LTSKTVKDFM…IANKYLQNAS (163 aa)) are GEF catalytic domain.

This sequence belongs to the GEF (guanine exchange factor) SopE family.

The protein localises to the secreted. Functionally, activator for CDC42 by directly engaging this Rho GTPase and acting as potent guanine nucleotide exchange factor (GEF). This activation results in actin cytoskeleton rearrangements and stimulates membrane ruffling, promoting bacterial entry into non-phagocytic cells. Also activates NF-kB, p38 and ERK kinases, which are known to be involved in the induction of IL-8 expression. Chaperone InvB is required for secretion, translocation and stabilization of intracellular levels of sopE2. The polypeptide is Guanine nucleotide exchange factor sopE2 (sopE2) (Salmonella typhimurium (strain LT2 / SGSC1412 / ATCC 700720)).